The primary structure comprises 284 residues: D-tagatose-1,6-bisphosphate aldolase subunit GatY (284 aa).

Asp-82 (proton donor) is an active-site residue. Zn(2+)-binding residues include His-83 and His-180. Gly-181 is a dihydroxyacetone phosphate binding site. His-208 contacts Zn(2+). Dihydroxyacetone phosphate-binding positions include 209–211 and 230–233; these read GAS and NVAT.

This sequence belongs to the class II fructose-bisphosphate aldolase family. TagBP aldolase GatY subfamily. In terms of assembly, forms a complex with GatZ. Zn(2+) serves as cofactor.

The enzyme catalyses D-tagatofuranose 1,6-bisphosphate = D-glyceraldehyde 3-phosphate + dihydroxyacetone phosphate. It participates in carbohydrate metabolism; D-tagatose 6-phosphate degradation; D-glyceraldehyde 3-phosphate and glycerone phosphate from D-tagatose 6-phosphate: step 2/2. Its function is as follows. Catalytic subunit of the tagatose-1,6-bisphosphate aldolase GatYZ, which catalyzes the reversible aldol condensation of dihydroxyacetone phosphate (DHAP or glycerone-phosphate) with glyceraldehyde 3-phosphate (G3P) to produce tagatose 1,6-bisphosphate (TBP). Requires GatZ subunit for full activity and stability. Is involved in the catabolism of galactitol. The sequence is that of D-tagatose-1,6-bisphosphate aldolase subunit GatY from Shigella flexneri serotype 5b (strain 8401).